The sequence spans 307 residues: 2-dehydropantoate 2-reductase (307 aa).

NADP(+) is bound by residues 7 to 12 (GSGAMG), N102, and A128. N102 provides a ligand contact to substrate. The active-site Proton donor is the K184. N188, N192, and S255 together coordinate substrate. E268 is a binding site for NADP(+).

Belongs to the ketopantoate reductase family.

It is found in the cytoplasm. It catalyses the reaction (R)-pantoate + NADP(+) = 2-dehydropantoate + NADPH + H(+). It participates in cofactor biosynthesis; (R)-pantothenate biosynthesis; (R)-pantoate from 3-methyl-2-oxobutanoate: step 2/2. Catalyzes the NADPH-dependent reduction of ketopantoate into pantoic acid. The sequence is that of 2-dehydropantoate 2-reductase (apbA) from Streptococcus pyogenes serotype M1.